Consider the following 380-residue polypeptide: Putative 8-amino-7-oxononanoate synthase (380 aa).

R18 is a binding site for substrate. G106 to Y107 is a binding site for pyridoxal 5'-phosphate. A substrate-binding site is contributed by H131. Pyridoxal 5'-phosphate-binding positions include S179, D205–H208, and T236–K239. At K239 the chain carries N6-(pyridoxal phosphate)lysine. T352 serves as a coordination point for substrate.

Belongs to the class-II pyridoxal-phosphate-dependent aminotransferase family. BioF subfamily. As to quaternary structure, homodimer. Requires pyridoxal 5'-phosphate as cofactor.

It carries out the reaction 6-carboxyhexanoyl-[ACP] + L-alanine + H(+) = (8S)-8-amino-7-oxononanoate + holo-[ACP] + CO2. Its pathway is cofactor biosynthesis; biotin biosynthesis. Functionally, catalyzes the decarboxylative condensation of pimeloyl-[acyl-carrier protein] and L-alanine to produce 8-amino-7-oxononanoate (AON), [acyl-carrier protein], and carbon dioxide. This chain is Putative 8-amino-7-oxononanoate synthase (bioF), found in Neisseria gonorrhoeae (strain ATCC 700825 / FA 1090).